The chain runs to 365 residues: GTPase Obg (365 aa).

An Obg domain is found at Glu2–Leu160. In terms of domain architecture, OBG-type G spans Ala161 to Phe329. GTP is bound by residues Gly167 to Ser174, Phe192 to Ser196, Asp215 to Gly218, Asn282 to Asp285, and Ser310 to Asp312. Mg(2+) is bound by residues Ser174 and Thr194.

This sequence belongs to the TRAFAC class OBG-HflX-like GTPase superfamily. OBG GTPase family. As to quaternary structure, monomer. Requires Mg(2+) as cofactor.

The protein resides in the cytoplasm. In terms of biological role, an essential GTPase which binds GTP, GDP and possibly (p)ppGpp with moderate affinity, with high nucleotide exchange rates and a fairly low GTP hydrolysis rate. Plays a role in control of the cell cycle, stress response, ribosome biogenesis and in those bacteria that undergo differentiation, in morphogenesis control. This is GTPase Obg from Leptospira borgpetersenii serovar Hardjo-bovis (strain JB197).